Reading from the N-terminus, the 476-residue chain is tRNA(Ile)-lysidine synthase (476 aa).

30-35 (SGGPDS) is a binding site for ATP.

It belongs to the tRNA(Ile)-lysidine synthase family.

Its subcellular location is the cytoplasm. It carries out the reaction cytidine(34) in tRNA(Ile2) + L-lysine + ATP = lysidine(34) in tRNA(Ile2) + AMP + diphosphate + H(+). Ligates lysine onto the cytidine present at position 34 of the AUA codon-specific tRNA(Ile) that contains the anticodon CAU, in an ATP-dependent manner. Cytidine is converted to lysidine, thus changing the amino acid specificity of the tRNA from methionine to isoleucine. This is tRNA(Ile)-lysidine synthase from Bacillus cereus (strain ATCC 10987 / NRS 248).